The primary structure comprises 447 residues: Phosphoglucosamine mutase (447 aa).

Ser-102 serves as the catalytic Phosphoserine intermediate. The Mg(2+) site is built by Ser-102, Asp-241, Asp-243, and Asp-245. Ser-102 carries the post-translational modification Phosphoserine.

The protein belongs to the phosphohexose mutase family. Mg(2+) serves as cofactor. Activated by phosphorylation.

The enzyme catalyses alpha-D-glucosamine 1-phosphate = D-glucosamine 6-phosphate. In terms of biological role, catalyzes the conversion of glucosamine-6-phosphate to glucosamine-1-phosphate. In Ruegeria sp. (strain TM1040) (Silicibacter sp.), this protein is Phosphoglucosamine mutase.